A 298-amino-acid polypeptide reads, in one-letter code: Multifunctional dioxygenase ausE (298 aa).

Residues Arg72 and Gln127 each coordinate substrate. 2 residues coordinate Fe cation: His130 and Asp132. Thr167 is a binding site for substrate. His214 contributes to the Fe cation binding site. Arg226 contributes to the substrate binding site.

This sequence belongs to the PhyH family. In terms of assembly, homodimer. The cofactor is Fe cation.

It carries out the reaction preaustinoid A1 + 2-oxoglutarate + O2 = preaustinoid A2 + succinate + CO2 + H2O. The catalysed reaction is preaustinoid A2 + 2-oxoglutarate + O2 = preaustinoid A3 + succinate + CO2 + H2O. The enzyme catalyses berkeleyone A + 2-oxoglutarate + O2 = preaustinoid A + succinate + CO2 + H2O. It participates in secondary metabolite biosynthesis; terpenoid biosynthesis. Functionally, multifunctional dioxygenase; part of the gene cluster that mediates the biosynthesis of calidodehydroaustin, a fungal meroterpenoid. The first step of the pathway is the synthesis of 3,5-dimethylorsellinic acid by the polyketide synthase ausA. 3,5-dimethylorsellinic acid is then prenylated by the polyprenyl transferase ausN. Further epoxidation by the FAD-dependent monooxygenase ausM and cyclization by the probable terpene cyclase ausL lead to the formation of protoaustinoid A. Protoaustinoid A is then oxidized to spiro-lactone preaustinoid A3 by the combined action of the FAD-binding monooxygenases ausB and ausC, and the dioxygenase ausE. Acid-catalyzed keto-rearrangement and ring contraction of the tetraketide portion of preaustinoid A3 by ausJ lead to the formation of preaustinoid A4. The aldo-keto reductase ausK, with the help of ausH, is involved in the next step by transforming preaustinoid A4 into isoaustinone which is in turn hydroxylated by the P450 monooxygenase ausI to form austinolide. The cytochrome P450 monooxygenase ausG modifies austinolide to austinol. Austinol is further acetylated to austin by the O-acetyltransferase ausP, which spontaneously changes to dehydroaustin. The cytochrome P450 monooxygenase ausR then converts dehydroaustin is into 7-dehydrodehydroaustin. The hydroxylation catalyzed by ausR permits the O-acetyltransferase ausQ to add an additional acetyl group to the molecule, leading to the formation of acetoxydehydroaustin. The short chain dehydrogenase ausT catalyzes the reduction of the double bond present between carbon atoms 1 and 2 to convert 7-dehydrodehydroaustin into 1,2-dihydro-7-hydroxydehydroaustin. AusQ catalyzes not only an acetylation reaction but also the addition of the PKS ausV diketide product to 1,2-dihydro-7-hydroxydehydroaustin, forming precalidodehydroaustin. Finally, the iron/alpha-ketoglutarate-dependent dioxygenase converts precalidodehydroaustin into calidodehydroaustin. The protein is Multifunctional dioxygenase ausE of Aspergillus calidoustus.